We begin with the raw amino-acid sequence, 291 residues long: Protein ZAR1-like (291 aa).

The segment at 103-152 is disordered; that stretch reads GSQTLHSSSLSDRTSSRKPTEAWEVGRRALIRRPQDGEDEESQEELTGPT. A compositionally biased stretch (low complexity) spans 106–115; the sequence is TLHSSSLSDR. The span at 116-129 shows a compositional bias: basic and acidic residues; that stretch reads TSSRKPTEAWEVGR. The segment at 195–280 adopts a 3CxxC-type zinc-finger fold; that stretch reads LKYGYFHCKD…QELCGHCKDK (86 aa).

It belongs to the ZAR1 family. In terms of assembly, interacts with YBX2. Expressed in oocytes and zygotes. Predominantly expressed in maturing oocytes before maternal-to-zygotic transition (MZT). Less abundant than Zar1.

The protein localises to the cytoplasm. It is found in the cytoplasmic ribonucleoprotein granule. In terms of biological role, mRNA-binding protein required for maternal mRNA storage, translation and degradation during oocyte maturation. Probably promotes formation of some phase-separated membraneless compartment that stores maternal mRNAs in oocytes: acts by undergoing liquid-liquid phase separation upon binding to maternal mRNAs. Binds to the 3'-UTR of maternal mRNAs, inhibiting their translation. The chain is Protein ZAR1-like from Mus musculus (Mouse).